The primary structure comprises 527 residues: Peptide chain release factor 3 (527 aa).

Residues 9-277 (AKRRTFAIIS…CIVDWAPQPL (269 aa)) enclose the tr-type G domain. Residues 18-25 (SHPDAGKT), 86-90 (DTPGH), and 140-143 (NKLD) each bind GTP.

The protein belongs to the TRAFAC class translation factor GTPase superfamily. Classic translation factor GTPase family. PrfC subfamily.

It is found in the cytoplasm. Its function is as follows. Increases the formation of ribosomal termination complexes and stimulates activities of RF-1 and RF-2. It binds guanine nucleotides and has strong preference for UGA stop codons. It may interact directly with the ribosome. The stimulation of RF-1 and RF-2 is significantly reduced by GTP and GDP, but not by GMP. The protein is Peptide chain release factor 3 of Pseudomonas aeruginosa (strain LESB58).